Reading from the N-terminus, the 326-residue chain is L-threo-3-hydroxyaspartate ammonia-lyase (326 aa).

Lysine 53 carries the N6-(pyridoxal phosphate)lysine modification. Pyridoxal 5'-phosphate contacts are provided by residues asparagine 80, 179–183, and serine 304; that span reads GGGGL.

It belongs to the serine/threonine dehydratase family. As to quaternary structure, monomer. Pyridoxal 5'-phosphate is required as a cofactor. Requires Mn(2+) as cofactor. The cofactor is Mg(2+). It depends on Ca(2+) as a cofactor.

The catalysed reaction is (3S)-3-hydroxy-L-aspartate = oxaloacetate + NH4(+). With respect to regulation, is strongly inhibited by hydroxylamine and EDTA in vitro. In terms of biological role, catalyzes the deamination of L-threo-3-hydroxyaspartate to oxaloacetate and ammonia. Shows a high specificity towards L-threo-3-hydroxyaspartate as other 3-hydroxyaminoacids, i.e. D,L-erythro- and D-threo-3-hydroxyaspartate, D-threonine, L-threonine, D,L-allothreonine, D-serine, and L-serine, are not substrates for this enzyme. Exhibits no detectable serine racemase activity. Is responsible for the 3-hydroxyaspartate resistance of S.cerevisiae, and thus may be involved in the detoxification of naturally occurring 3-hydroxyaspartate. The sequence is that of L-threo-3-hydroxyaspartate ammonia-lyase (SRY1) from Saccharomyces cerevisiae (strain ATCC 204508 / S288c) (Baker's yeast).